A 415-amino-acid polypeptide reads, in one-letter code: U-box domain-containing protein 29 (415 aa).

Positions 11–85 (TVPSFFKCPI…NIWSDSIGRR (75 aa)) constitute a U-box domain. ARM repeat units lie at residues 221 to 263 (KSKL…TISK) and 265 to 307 (KRVR…TLSS).

Binds to SD129 and SD25.

The catalysed reaction is S-ubiquitinyl-[E2 ubiquitin-conjugating enzyme]-L-cysteine + [acceptor protein]-L-lysine = [E2 ubiquitin-conjugating enzyme]-L-cysteine + N(6)-ubiquitinyl-[acceptor protein]-L-lysine.. Its pathway is protein modification; protein ubiquitination. In terms of biological role, functions as an E3 ubiquitin ligase. The sequence is that of U-box domain-containing protein 29 (PUB29) from Arabidopsis thaliana (Mouse-ear cress).